Reading from the N-terminus, the 300-residue chain is Free fatty acid receptor 1 (300 aa).

Residues 1 to 8 (MDLPPQLS) are Extracellular-facing. The chain crosses the membrane as a helical span at residues 9 to 31 (FALYVSAFALGFPLNLLAIRGAV). Residues 32 to 41 (SHAKLRLTPS) are Cytoplasmic-facing. A helical membrane pass occupies residues 42 to 64 (LVYTLHLACSDLLLAITLPLKAV). Residues 65–79 (EALASGVWPLPLPFC) lie on the Extracellular side of the membrane. C79 and C170 form a disulfide bridge. The chain crosses the membrane as a helical span at residues 80 to 101 (PVFALAHFAPLYAGGGFLAALS). At 102–121 (AGRYLGAAFPFGYQAIRRPC) the chain is on the cytoplasmic side. A helical transmembrane segment spans residues 122 to 142 (YSWGVCVAIWALVLCHLGLAL). The Extracellular segment spans residues 143 to 178 (GLEAPRGWVDNTTSSLGINIPVNGSPVCLEAWDPDS). N153 carries N-linked (GlcNAc...) asparagine glycosylation. The chain crosses the membrane as a helical span at residues 179–200 (ARPARLSFSILLFFLPLVITAF). Residues 201–223 (CYVGCLRALVHSGLSHKRKLRAA) lie on the Cytoplasmic side of the membrane. A helical membrane pass occupies residues 224–248 (WVAGGALLTLLLCLGPYNASNVASF). Over 249–256 (INPDLEGS) the chain is Extracellular. The helical transmembrane segment at 257–279 (WRKLGLITGAWSVVLNPLVTGYL) threads the bilayer. At 280–300 (GTGPGQGTICVTRTPRGTIQK) the chain is on the cytoplasmic side.

The protein belongs to the G-protein coupled receptor 1 family. Expressed abundantly in pancreatic beta cells.

It localises to the cell membrane. Its function is as follows. G-protein coupled receptor for medium and long chain saturated and unsaturated fatty acids that plays an important role in glucose homeostasis. Fatty acid binding increases glucose-stimulated insulin secretion, and may also enhance the secretion of glucagon-like peptide 1 (GLP-1). May also play a role in bone homeostasis; receptor signaling activates pathways that inhibit osteoclast differentiation. Ligand binding leads to a conformation change that triggers signaling via G-proteins that activate phospholipase C, leading to an increase of the intracellular calcium concentration. Seems to act through a G(q) and G(i)-mediated pathway. Mediates the anti-inflammatory effects of omega-3 polyunsaturated fatty acids (PUFAs) via inhibition of NLRP3 inflammasome activation. The polypeptide is Free fatty acid receptor 1 (Ffar1) (Rattus norvegicus (Rat)).